The chain runs to 95 residues: Small ribosomal subunit protein bS18 (95 aa).

The protein belongs to the bacterial ribosomal protein bS18 family. As to quaternary structure, part of the 30S ribosomal subunit. Forms a tight heterodimer with protein bS6.

Its function is as follows. Binds as a heterodimer with protein bS6 to the central domain of the 16S rRNA, where it helps stabilize the platform of the 30S subunit. In Ehrlichia canis (strain Jake), this protein is Small ribosomal subunit protein bS18.